The chain runs to 386 residues: Lycopene beta-cyclase (386 aa).

4–34 lines the NAD(+) pocket; that stretch reads DVLLAGAGLANGLIALALRAARPDLRVLLLD.

Belongs to the lycopene cyclase family. It depends on FAD as a cofactor.

The enzyme catalyses a carotenoid psi-end group = a carotenoid beta-end derivative. It catalyses the reaction all-trans-lycopene = gamma-carotene. The catalysed reaction is gamma-carotene = all-trans-beta-carotene. The protein operates within carotenoid biosynthesis; astaxanthin biosynthesis. Functionally, catalyzes the double cyclization reaction which converts lycopene to beta-carotene. The protein is Lycopene beta-cyclase of Paracoccus sp. (strain N81106 / MBIC 01143) (Agrobacterium aurantiacum).